Consider the following 1393-residue polypeptide: DNA-directed RNA polymerase subunit beta'' (1393 aa).

Cys-224, Cys-295, Cys-302, and Cys-305 together coordinate Zn(2+).

The protein belongs to the RNA polymerase beta' chain family. RpoC2 subfamily. In terms of assembly, in plastids the minimal PEP RNA polymerase catalytic core is composed of four subunits: alpha, beta, beta', and beta''. When a (nuclear-encoded) sigma factor is associated with the core the holoenzyme is formed, which can initiate transcription. It depends on Zn(2+) as a cofactor.

The protein localises to the plastid. Its subcellular location is the chloroplast. It carries out the reaction RNA(n) + a ribonucleoside 5'-triphosphate = RNA(n+1) + diphosphate. DNA-dependent RNA polymerase catalyzes the transcription of DNA into RNA using the four ribonucleoside triphosphates as substrates. In Manihot esculenta (Cassava), this protein is DNA-directed RNA polymerase subunit beta''.